The primary structure comprises 89 residues: Small ribosomal subunit protein uS15 (89 aa).

A compositionally biased stretch (basic and acidic residues) spans 1–21 (MSLHQERKSELVSKFRTHESD). The segment at 1 to 25 (MSLHQERKSELVSKFRTHESDTGSP) is disordered.

It belongs to the universal ribosomal protein uS15 family. As to quaternary structure, part of the 30S ribosomal subunit. Forms a bridge to the 50S subunit in the 70S ribosome, contacting the 23S rRNA.

One of the primary rRNA binding proteins, it binds directly to 16S rRNA where it helps nucleate assembly of the platform of the 30S subunit by binding and bridging several RNA helices of the 16S rRNA. In terms of biological role, forms an intersubunit bridge (bridge B4) with the 23S rRNA of the 50S subunit in the ribosome. This is Small ribosomal subunit protein uS15 from Myxococcus xanthus (strain DK1622).